The sequence spans 201 residues: Large ribosomal subunit protein bL25 (201 aa).

The protein belongs to the bacterial ribosomal protein bL25 family. CTC subfamily. As to quaternary structure, part of the 50S ribosomal subunit; part of the 5S rRNA/L5/L18/L25 subcomplex. Contacts the 5S rRNA. Binds to the 5S rRNA independently of L5 and L18.

Its function is as follows. This is one of the proteins that binds to the 5S RNA in the ribosome where it forms part of the central protuberance. The polypeptide is Large ribosomal subunit protein bL25 (Burkholderia lata (strain ATCC 17760 / DSM 23089 / LMG 22485 / NCIMB 9086 / R18194 / 383)).